Consider the following 239-residue polypeptide: Putative HTH-type transcriptional regulator YkgA (239 aa).

An HTH araC/xylS-type domain is found at 19–117; that stretch reads QQLLEWIECN…GCSPREYRHR (99 aa). 2 consecutive DNA-binding regions (H-T-H motif) follow at residues 36-57 and 84-107; these read EDIAQKSGYSRRNIQLLFRNFM and MLDIALSLHFDSQQSFSREFKKLF.

The sequence is that of Putative HTH-type transcriptional regulator YkgA (ykgA) from Escherichia coli (strain K12).